A 204-amino-acid chain; its full sequence is Isochorismatase domain-containing protein 2 (204 aa).

Belongs to the isochorismatase family. Interacts with CDKN2A.

It is found in the cytoplasm. The protein localises to the nucleus. The polypeptide is Isochorismatase domain-containing protein 2 (ISOC2) (Bos taurus (Bovine)).